A 94-amino-acid polypeptide reads, in one-letter code: Copper resistance protein K (94 aa).

Positions 1–20 (MKQKLMVGAFIAAVSLSAAA) are cleaved as a signal peptide.

Monomer in the copper-bound form. Homodimer as apoprotein. Dissociates into monomers upon copper binding.

It localises to the periplasm. In terms of biological role, involved in resistance to copper. Can bind up to 2 copper ions. Has higher affinity for Cu(+) than for Cu(2+). The chain is Copper resistance protein K (copK) from Cupriavidus metallidurans (strain ATCC 43123 / DSM 2839 / NBRC 102507 / CH34) (Ralstonia metallidurans).